The primary structure comprises 306 residues: Recombination-associated protein RdgC (306 aa).

It belongs to the RdgC family.

Its subcellular location is the cytoplasm. The protein localises to the nucleoid. Its function is as follows. May be involved in recombination. The polypeptide is Recombination-associated protein RdgC (Pseudomonas fluorescens (strain Pf0-1)).